The chain runs to 1021 residues: Collagenase ColH (1021 aa).

Residues 1 to 30 (MKRKCLSKRLMLAITMATIFTVNSTLPIYA) form the signal peptide. The propeptide occupies 31 to 40 (AVDKNNATAA). Residues 41-320 (VQNESKRYTV…SADQIKRHYD (280 aa)) form an activator domain region. Positions 41 to 717 (VQNESKRYTV…TYDVVFHGYL (677 aa)) are S1 metalloprotease domain. The catalytic subdomain stretch occupies residues 330-601 (PLDKFKKEGK…MQERIDNYEN (272 aa)). Residue Asp-421 coordinates Zn(2+). Glu-430 contributes to the Ca(2+) binding site. His-455 contributes to the Zn(2+) binding site. The active site involves Glu-456. His-459 is a binding site for Zn(2+). Residues Gly-463, Val-467, and Gly-469 each coordinate Ca(2+). Glu-487 is a Zn(2+) binding site. The segment at 609–721 (DDYLVRHAYK…VFHGYLPNEG (113 aa)) is helper subdomain. Positions 718–810 (PNEGDSKNSL…VSTTTAEIKD (93 aa)) are S2a domain. Residues Asn-725, Ser-726, Asp-753, Asp-755, Asp-794, Asn-814, Lys-815, Asp-842, Asp-844, Asp-884, Glu-908, Glu-910, Asn-912, Asn-913, Thr-931, Asp-937, Gln-938, and Asp-939 each contribute to the Ca(2+) site. A PKD 1 domain is found at 727–808 (LPYGKINGTY…SSVSTTTAEI (82 aa)). Residues 811-904 (LSENKLPVIY…KIKITDPVYP (94 aa)) are S2b domain. In terms of domain architecture, PKD 2 spans 816 to 905 (LPVIYMHVPK…IKITDPVYPI (90 aa)). Residues 903–922 (YPIGTEKEPNNSKETASGPI) are disordered. An S3 collagen-binding domain region spans residues 905 to 1021 (IGTEKEPNNS…RINIEGSVGR (117 aa)). Residues 1002 to 1004 (YMF) form a collagen-binding region.

Belongs to the peptidase M9B family. Collagenase subfamily. Ca(2+) serves as cofactor. It depends on Zn(2+) as a cofactor. Post-translationally, upon purification gives rise to 98 kDa, 105 kDa and 116 kDa (full-length) proteins, all of which have the same N-terminus.

Its subcellular location is the secreted. It carries out the reaction Digestion of native collagen in the triple helical region at Xaa-|-Gly bonds. With synthetic peptides, a preference is shown for Gly at P3 and P1', Pro and Ala at P2 and P2', and hydroxyproline, Ala or Arg at P3'.. Its activity is regulated as follows. Inhibited by EDTA. Inhibited by 1-10-phenanthroline. Inhibited by broad-spectrum zinc metalloprotease inhibitor batimastat. N-aryl mercaptoacetamide-based inhibitors have been isolated that act on clostridial collagenases with submicromolar affinity while having negligibile activity on human collagenases. Clostridial collagenases are among the most efficient degraders of eukaryotic collagen known; saprophytes use collagen as a carbon source while pathogens additionally digest collagen to aid in host colonization. Has both tripeptidylcarboxypeptidase on Gly-X-Y and endopeptidase activities; the endopeptidase cuts within the triple helix region of collagen while tripeptidylcarboxypeptidase successively digests the exposed ends, thus clostridial collagenases can digest large sections of collagen. The full-length protein has collagenase activity, while both the 116 kDa and 98 kDa forms act on gelatin. In vitro digestion of soluble calf skin collagen fibrils requires both ColG and ColH; ColG forms missing the second collagen-binding domain is also synergistic with ColH, although their overall efficiency is decreased. Digestion of collagen requires Ca(2+) and is inhibited by EDTA. The activator domain (residues 119-388) and catalytic subdomain (330-601) open and close around substrate allowing digestion when the protein is closed. The sequence is that of Collagenase ColH from Hathewaya histolytica (Clostridium histolyticum).